The sequence spans 746 residues: NAD(P)H-quinone oxidoreductase subunit 5, chloroplastic (746 aa).

Transmembrane regions (helical) follow at residues 9–29, 40–60, 89–109, 125–145, 147–167, 185–205, 221–241, 258–278, 280–300, 327–347, 354–374, 396–416, 425–445, 547–567, 608–628, and 723–743; these read WIIPFIPLPVPILLGVGLLLF, WTFLSIFLLSIIMIFSLYLSI, IDPLTSIMSILITTVGILVLI, FAYMGFFNTSMLGLVTSSNLI, VYFFWELVGMCSYLLIGFWFT, GDFGLLLGILGLYWITGSFEF, VNLLFLTLCAFLLFVGPIAKS, TPISALIHAATMVAAGIFLVA, LLPLFIVIPSIMYIISLIGII, LGYMMLALGMGSYRSALFHLI, ALLFLGSGSIIHSMEAIVGYS, IAFLVGTLSLCGIPPLACFWS, LLFSPIFAIIAFSTAGLTAFY, ILFPMLVLLLFTLFIGAIGIP, FSVSIAFFGIFIAYYLYKPFY, and YLFLYLSYVLIFLMILFFFYF.

This sequence belongs to the complex I subunit 5 family. As to quaternary structure, NDH is composed of at least 16 different subunits, 5 of which are encoded in the nucleus.

The protein localises to the plastid. Its subcellular location is the chloroplast thylakoid membrane. The enzyme catalyses a plastoquinone + NADH + (n+1) H(+)(in) = a plastoquinol + NAD(+) + n H(+)(out). It catalyses the reaction a plastoquinone + NADPH + (n+1) H(+)(in) = a plastoquinol + NADP(+) + n H(+)(out). In terms of biological role, NDH shuttles electrons from NAD(P)H:plastoquinone, via FMN and iron-sulfur (Fe-S) centers, to quinones in the photosynthetic chain and possibly in a chloroplast respiratory chain. The immediate electron acceptor for the enzyme in this species is believed to be plastoquinone. Couples the redox reaction to proton translocation, and thus conserves the redox energy in a proton gradient. This chain is NAD(P)H-quinone oxidoreductase subunit 5, chloroplastic (ndhF), found in Nasturtium officinale (Watercress).